A 132-amino-acid chain; its full sequence is Small ribosomal subunit protein uS8 (132 aa).

It belongs to the universal ribosomal protein uS8 family. In terms of assembly, part of the 30S ribosomal subunit. Contacts proteins S5 and S12.

Its function is as follows. One of the primary rRNA binding proteins, it binds directly to 16S rRNA central domain where it helps coordinate assembly of the platform of the 30S subunit. This Ehrlichia chaffeensis (strain ATCC CRL-10679 / Arkansas) protein is Small ribosomal subunit protein uS8.